We begin with the raw amino-acid sequence, 145 residues long: 3-hydroxyacyl-[acyl-carrier-protein] dehydratase FabZ (145 aa).

The active site involves histidine 52.

Belongs to the thioester dehydratase family. FabZ subfamily.

The protein resides in the cytoplasm. The enzyme catalyses a (3R)-hydroxyacyl-[ACP] = a (2E)-enoyl-[ACP] + H2O. Involved in unsaturated fatty acids biosynthesis. Catalyzes the dehydration of short chain beta-hydroxyacyl-ACPs and long chain saturated and unsaturated beta-hydroxyacyl-ACPs. In Deinococcus radiodurans (strain ATCC 13939 / DSM 20539 / JCM 16871 / CCUG 27074 / LMG 4051 / NBRC 15346 / NCIMB 9279 / VKM B-1422 / R1), this protein is 3-hydroxyacyl-[acyl-carrier-protein] dehydratase FabZ.